The following is a 107-amino-acid chain: Replication initiation control protein YabA (107 aa).

Zn(2+) contacts are provided by His81, Cys83, Cys97, and Cys100.

The protein belongs to the YabA family. Homotetramer. Interacts with both DnaA and DnaN, acting as a bridge between these two proteins. The cofactor is Zn(2+).

It is found in the cytoplasm. Its subcellular location is the nucleoid. Involved in control of chromosome replication initiation. Inhibits the cooperative binding of DnaA to the oriC region, thus negatively regulating initiation of chromosome replication. Inhibits the ability of DnaA-ATP to form a helix on DNA; does not disassemble preformed DnaA-DNA helices. Decreases the residence time of DnaA on the chromosome at its binding sites (oriC, replication forks and promoter-binding sites). Tethers DnaA to the replication machinery via the DNA polymerase beta sliding clamp subunit (dnaN). Associates with oriC and other DnaA targets on the chromosome in a DnaA-dependent manner. This chain is Replication initiation control protein YabA, found in Streptococcus equi subsp. zooepidemicus (strain MGCS10565).